We begin with the raw amino-acid sequence, 178 residues long: uncharacterized protein (178 aa).

Residues 1 to 23 form the signal peptide; that stretch reads MNYSVIWAITILILGLVLTLAWA.

This is an uncharacterized protein from Invertebrate iridescent virus 3 (IIV-3).